Consider the following 241-residue polypeptide: ATP synthase subunit 4, mitochondrial (241 aa).

A mitochondrion-targeting transit peptide spans 1–35; that stretch reads MASRLARTAVGAARLRPSVVPRVLPALSTVASPRY.

This sequence belongs to the eukaryotic ATPase B chain family. In terms of assembly, F-type ATPases have 2 components, CF(1) - the catalytic core - and CF(0) - the membrane proton channel. In yeast, the dimeric form of ATP synthase consists of 17 polypeptides: alpha, beta, gamma, delta, epsilon, 4 (B), 5 (OSCP), 6 (A), 8, 9 (C), d, E (Tim11), f, g, h, i/j and k.

Its subcellular location is the mitochondrion. It is found in the mitochondrion inner membrane. Its function is as follows. Mitochondrial membrane ATP synthase (F(1)F(0) ATP synthase or Complex V) produces ATP from ADP in the presence of a proton gradient across the membrane which is generated by electron transport complexes of the respiratory chain. F-type ATPases consist of two structural domains, F(1) - containing the extramembraneous catalytic core, and F(0) - containing the membrane proton channel, linked together by a central stalk and a peripheral stalk. During catalysis, ATP synthesis in the catalytic domain of F(1) is coupled via a rotary mechanism of the central stalk subunits to proton translocation. Part of the complex F(0) domain and the peripheric stalk, which acts as a stator to hold the catalytic alpha(3)beta(3) subcomplex and subunit a/atp6 static relative to the rotary elements. This Neurospora crassa (strain ATCC 24698 / 74-OR23-1A / CBS 708.71 / DSM 1257 / FGSC 987) protein is ATP synthase subunit 4, mitochondrial (atp-3).